The primary structure comprises 319 residues: 4-hydroxy-3-methylbut-2-enyl diphosphate reductase (319 aa).

Cys-15 provides a ligand contact to [4Fe-4S] cluster. (2E)-4-hydroxy-3-methylbut-2-enyl diphosphate is bound by residues His-44 and His-77. Residues His-44 and His-77 each contribute to the dimethylallyl diphosphate site. Positions 44 and 77 each coordinate isopentenyl diphosphate. Cys-99 lines the [4Fe-4S] cluster pocket. (2E)-4-hydroxy-3-methylbut-2-enyl diphosphate is bound at residue His-127. His-127 contributes to the dimethylallyl diphosphate binding site. Position 127 (His-127) interacts with isopentenyl diphosphate. Residue Glu-129 is the Proton donor of the active site. A (2E)-4-hydroxy-3-methylbut-2-enyl diphosphate-binding site is contributed by Thr-172. Cys-202 contacts [4Fe-4S] cluster. 4 residues coordinate (2E)-4-hydroxy-3-methylbut-2-enyl diphosphate: Ser-230, Ser-231, Asn-232, and Ser-274. Dimethylallyl diphosphate contacts are provided by Ser-230, Ser-231, Asn-232, and Ser-274. Ser-230, Ser-231, Asn-232, and Ser-274 together coordinate isopentenyl diphosphate.

This sequence belongs to the IspH family. [4Fe-4S] cluster is required as a cofactor.

The enzyme catalyses isopentenyl diphosphate + 2 oxidized [2Fe-2S]-[ferredoxin] + H2O = (2E)-4-hydroxy-3-methylbut-2-enyl diphosphate + 2 reduced [2Fe-2S]-[ferredoxin] + 2 H(+). It carries out the reaction dimethylallyl diphosphate + 2 oxidized [2Fe-2S]-[ferredoxin] + H2O = (2E)-4-hydroxy-3-methylbut-2-enyl diphosphate + 2 reduced [2Fe-2S]-[ferredoxin] + 2 H(+). Its pathway is isoprenoid biosynthesis; dimethylallyl diphosphate biosynthesis; dimethylallyl diphosphate from (2E)-4-hydroxy-3-methylbutenyl diphosphate: step 1/1. The protein operates within isoprenoid biosynthesis; isopentenyl diphosphate biosynthesis via DXP pathway; isopentenyl diphosphate from 1-deoxy-D-xylulose 5-phosphate: step 6/6. In terms of biological role, catalyzes the conversion of 1-hydroxy-2-methyl-2-(E)-butenyl 4-diphosphate (HMBPP) into a mixture of isopentenyl diphosphate (IPP) and dimethylallyl diphosphate (DMAPP). Acts in the terminal step of the DOXP/MEP pathway for isoprenoid precursor biosynthesis. This Xanthomonas euvesicatoria pv. vesicatoria (strain 85-10) (Xanthomonas campestris pv. vesicatoria) protein is 4-hydroxy-3-methylbut-2-enyl diphosphate reductase.